The chain runs to 608 residues: Isocitrate dehydrogenase kinase/phosphatase (608 aa).

ATP contacts are provided by residues 327–333 (APGIKGL) and K348. The active site involves D383.

This sequence belongs to the AceK family.

The protein resides in the cytoplasm. The catalysed reaction is L-seryl-[isocitrate dehydrogenase] + ATP = O-phospho-L-seryl-[isocitrate dehydrogenase] + ADP + H(+). In terms of biological role, bifunctional enzyme which can phosphorylate or dephosphorylate isocitrate dehydrogenase (IDH) on a specific serine residue. This is a regulatory mechanism which enables bacteria to bypass the Krebs cycle via the glyoxylate shunt in response to the source of carbon. When bacteria are grown on glucose, IDH is fully active and unphosphorylated, but when grown on acetate or ethanol, the activity of IDH declines drastically concomitant with its phosphorylation. This chain is Isocitrate dehydrogenase kinase/phosphatase, found in Burkholderia ambifaria (strain ATCC BAA-244 / DSM 16087 / CCUG 44356 / LMG 19182 / AMMD) (Burkholderia cepacia (strain AMMD)).